The following is a 61-amino-acid chain: Small ribosomal subunit protein uS14 (61 aa).

4 residues coordinate Zn(2+): C24, C27, C40, and C43.

Belongs to the universal ribosomal protein uS14 family. Zinc-binding uS14 subfamily. Part of the 30S ribosomal subunit. Contacts proteins S3 and S10. It depends on Zn(2+) as a cofactor.

In terms of biological role, binds 16S rRNA, required for the assembly of 30S particles and may also be responsible for determining the conformation of the 16S rRNA at the A site. This chain is Small ribosomal subunit protein uS14, found in Thermodesulfovibrio yellowstonii (strain ATCC 51303 / DSM 11347 / YP87).